The following is a 926-amino-acid chain: MVSSLLPNPPSAECWAALLHDPMTLDMDAVLSDFVRSTGAEPGLARDLLEGKNWDLTAALSDYEQLRQVHTANLPHVFNEGRCAKQAERELPQPGHKVERPCLQRQDDIAQAEKRLSRGISHASSAIVSLARSHVANECNNEQFPLEMPIYTFQLPDLSVYSEDFRSFIERDLIEQATMVALEQAGRLNWWSTVCTSCKRLLPLATTGDGNCLLHAASLGMWGFHDRDLVLRKALYTMMRTGAEREALKRRWRWQQTQQNKEEEWEREWTELLKLASSEPRTHFSKNGSGTGGGVDNSEDPVYESLEEFHVFVLAHILRRPIVVVADTMLRDSGGEAFAPIPFGGIYLPLEVPPNRCHCSPLVLAYDQAHFSALVSMEQRDQQREQAVIPLTDSEHKLLPLHFAVDPGKDWEWGKDDNDNARLANLILSLEAKLNLLHSYMNVTWIRIPSETRAPLAQPESPTASAGEDVQSLAESLDSDRDSVCSNSNSNNGKNGKDKEKEKQRKDKDKTRADSVANKLGSFSKTLGIKLKKNMGGLGGLVHGKMGRANSANGKNGDSAERNKEKKSKSRKGSKEESGASASTSPSEKTTPSPTDKASGASPADKGSGSRGDAWKYSTDVKLSLNILRAAMQGERKFIFAGLLLTSHRHQFHEEMIGYYLTSAQERFSAEQEQRRRDAAAAAAAATATATVKRPARRPEAEGAPGPERASPGPTAAQPTQLVLKLKERPSPGTGASARAARAAGGAASPGPGGGARRAAPGTGGPTPGRSPPAPARQSVIHVQAAARDEACAPTVGALRPCATYPQQNRSLWSQSYSPARSALRTVNTVESLAPGGADAPGPAEHKSQTYSNGFGAARDGLEFADADAPAARSNAECGRGGPGPAQRRCQRENCAFYGRAETEHFCSYCYREELRRRREARAARP.

Phosphoserine is present on Ser121. The TRAF-binding stretch occupies residues 170–413 (ERDLIEQATM…AVDPGKDWEW (244 aa)). The interval 185–452 (AGRLNWWSTV…VTWIRIPSET (268 aa)) is catalytic. The OTU domain occupies 201–377 (LLPLATTGDG…QAHFSALVSM (177 aa)). Asp209 is a catalytic residue. Cys212 serves as the catalytic Nucleophile. The Proton acceptor role is filled by His370. 3 disordered regions span residues 455–517 (PLAQ…DSVA), 540–615 (GLVH…GDAW), and 671–779 (EQEQ…ARQS). A compositionally biased stretch (low complexity) spans 484–494 (VCSNSNSNNGK). Residues 495–513 (NGKDKEKEKQRKDKDKTRA) show a composition bias toward basic and acidic residues. The Nuclear localization signal signature appears at 497–512 (KDKEKEKQRKDKDKTR). Low complexity-rich tracts occupy residues 579-595 (GASASTSPSEKTTPSPT), 680-691 (AAAAAAATATAT), and 731-750 (SPGTGASARAARAAGGAASP). Residues 751-767 (GPGGGARRAAPGTGGPT) show a composition bias toward gly residues. Arg880 bears the Omega-N-methylarginine mark. Residues 884–919 (GPAQRRCQRENCAFYGRAETEHFCSYCYREELRRRR) form an A20-type zinc finger. Zn(2+)-binding residues include Cys890, Cys895, Cys907, and Cys910.

This sequence belongs to the peptidase C64 family.

It localises to the cytoplasm. The protein localises to the nucleus. It catalyses the reaction Thiol-dependent hydrolysis of ester, thioester, amide, peptide and isopeptide bonds formed by the C-terminal Gly of ubiquitin (a 76-residue protein attached to proteins as an intracellular targeting signal).. Functionally, deubiquitinase, which cleaves 'Lys-11'-linked polyubiquitin chains. This is OTU domain-containing protein 7A (Otud7a) from Mus musculus (Mouse).